The sequence spans 117 residues: Large ribosomal subunit protein bL19 (117 aa).

The protein belongs to the bacterial ribosomal protein bL19 family.

This protein is located at the 30S-50S ribosomal subunit interface and may play a role in the structure and function of the aminoacyl-tRNA binding site. In Halorhodospira halophila (strain DSM 244 / SL1) (Ectothiorhodospira halophila (strain DSM 244 / SL1)), this protein is Large ribosomal subunit protein bL19.